Here is a 154-residue protein sequence, read N- to C-terminus: SsrA-binding protein (154 aa).

It belongs to the SmpB family.

It is found in the cytoplasm. Required for rescue of stalled ribosomes mediated by trans-translation. Binds to transfer-messenger RNA (tmRNA), required for stable association of tmRNA with ribosomes. tmRNA and SmpB together mimic tRNA shape, replacing the anticodon stem-loop with SmpB. tmRNA is encoded by the ssrA gene; the 2 termini fold to resemble tRNA(Ala) and it encodes a 'tag peptide', a short internal open reading frame. During trans-translation Ala-aminoacylated tmRNA acts like a tRNA, entering the A-site of stalled ribosomes, displacing the stalled mRNA. The ribosome then switches to translate the ORF on the tmRNA; the nascent peptide is terminated with the 'tag peptide' encoded by the tmRNA and targeted for degradation. The ribosome is freed to recommence translation, which seems to be the essential function of trans-translation. This chain is SsrA-binding protein, found in Ruminiclostridium cellulolyticum (strain ATCC 35319 / DSM 5812 / JCM 6584 / H10) (Clostridium cellulolyticum).